Reading from the N-terminus, the 545-residue chain is MNGIKHIFITGGVVSSIGKGLTAASLGSLLTMRGLKVFIKKLDPYLNVDPGTMNPLQHGEVFITEDGAETDLDVGHYERFLDVDLDRTANVTTGQVYSKVITLERTGRYLGETVQVIPHITDEIKRRIRLAPDDIDVIITEIGGTVGDIESQPFIEAARQIRREVGRENCCFIHVSLVPFLESAGEQKTKPTQHSVAILRAAGIQPDALVLRSDKPISSANQKKIALMCDVSAVVNAVTVPNIYEIPCVLNQHGLDKFVIKHLDLEAGEIDWSYWDDVLDAIENNRSEIEIAIIGKYTGLPDAYISVIEALRAGGFESKTKVNIKWVDSDDENLEDQLENINGACIPGGFGIRGIEGLIKAIRICREREIPTLGICLGMQCMVIEYARHVVGMHGASSTEFTDDTQWPVVTTMLEQRDILIDDQFGGTMRLGSYRAVLSVGSLAASLYGTTDIHERHRHRYEVNNGYAQRLVERGLIVSGRNTEQDLIEFIELDRKDHPFYIGTQAHPECKSRPKRPHPLFKGLVAAALARKEIAEFNSGKTVLQ.

The segment at 1-265 (MNGIKHIFIT…DKFVIKHLDL (265 aa)) is amidoligase domain. A CTP-binding site is contributed by S15. S15 lines the UTP pocket. ATP is bound by residues 16 to 21 (SIGKGL) and D73. Residues D73 and E141 each contribute to the Mg(2+) site. Residues 148 to 150 (DIE), 188 to 193 (KTKPTQ), and K224 each bind CTP. UTP is bound by residues 188 to 193 (KTKPTQ) and K224. The Glutamine amidotransferase type-1 domain maps to 290–534 (EIAIIGKYTG…VAAALARKEI (245 aa)). L-glutamine is bound at residue G349. C376 serves as the catalytic Nucleophile; for glutamine hydrolysis. L-glutamine contacts are provided by residues 377–380 (LGMQ), E400, and R460. Catalysis depends on residues H507 and E509.

It belongs to the CTP synthase family. Homotetramer.

The enzyme catalyses UTP + L-glutamine + ATP + H2O = CTP + L-glutamate + ADP + phosphate + 2 H(+). It carries out the reaction L-glutamine + H2O = L-glutamate + NH4(+). It catalyses the reaction UTP + NH4(+) + ATP = CTP + ADP + phosphate + 2 H(+). It functions in the pathway pyrimidine metabolism; CTP biosynthesis via de novo pathway; CTP from UDP: step 2/2. Allosterically activated by GTP, when glutamine is the substrate; GTP has no effect on the reaction when ammonia is the substrate. The allosteric effector GTP functions by stabilizing the protein conformation that binds the tetrahedral intermediate(s) formed during glutamine hydrolysis. Inhibited by the product CTP, via allosteric rather than competitive inhibition. Functionally, catalyzes the ATP-dependent amination of UTP to CTP with either L-glutamine or ammonia as the source of nitrogen. Regulates intracellular CTP levels through interactions with the four ribonucleotide triphosphates. This Tropheryma whipplei (strain TW08/27) (Whipple's bacillus) protein is CTP synthase.